A 194-amino-acid polypeptide reads, in one-letter code: Segregation and condensation protein B (194 aa).

The protein belongs to the ScpB family. As to quaternary structure, homodimer. Homodimerization may be required to stabilize the binding of ScpA to the Smc head domains. Component of a cohesin-like complex composed of ScpA, ScpB and the Smc homodimer, in which ScpA and ScpB bind to the head domain of Smc. The presence of the three proteins is required for the association of the complex with DNA.

The protein resides in the cytoplasm. Participates in chromosomal partition during cell division. May act via the formation of a condensin-like complex containing Smc and ScpA that pull DNA away from mid-cell into both cell halves. The sequence is that of Segregation and condensation protein B from Brevibacillus brevis (strain 47 / JCM 6285 / NBRC 100599).